Reading from the N-terminus, the 219-residue chain is Large ribosomal subunit protein uL16y (219 aa).

The protein belongs to the universal ribosomal protein uL16 family. In terms of assembly, component of the small ribosomal subunit. Mature ribosomes consist of a small (40S) and a large (60S) subunit. The 40S subunit contains about 33 different proteins and 1 molecule of RNA (18S). The 60S subunit contains about 49 different proteins and 3 molecules of RNA (25S, 5.8S and 5S).

This chain is Large ribosomal subunit protein uL16y (SG12), found in Oryza sativa subsp. japonica (Rice).